Here is a 1418-residue protein sequence, read N- to C-terminus: Sterol 3-beta-glucosyltransferase (1418 aa).

A compositionally biased stretch (basic and acidic residues) spans 1–16 (MRPFLDDAKRRVDRKL). 3 disordered regions span residues 1–59 (MRPF…SREG), 83–188 (ARFD…RSAT), and 207–233 (LKASSTERSQPSLDESGEKGPRGASVS). Over residues 18 to 28 (ASRQSLSTSRL) the composition is skewed to polar residues. Basic and acidic residues-rich tracts occupy residues 35–44 (DRLKDNHDAQ) and 95–105 (SEQRPRKESSV). Polar residues predominate over residues 106–115 (RKGTSASANT). The span at 116–126 (SSPLDSSQRSS) shows a compositional bias: low complexity. 2 stretches are compositionally biased toward basic and acidic residues: residues 127-139 (SRTDGKSEKESGT) and 147-166 (TISDHKLFRPFESNSKHEPQ). Residues 209–219 (ASSTERSQPSL) are compositionally biased toward polar residues. Residues 249–288 (EKVLVEYACSLLQSILLQGYMYVTEGHICFYAYLPKKSTV) form the GRAM 1 domain. Residues 289–387 (AIKSGYLYKR…WVKALQKVIF (99 aa)) enclose the PH domain. Positions 462–651 (ISSQHLSPQP…DPTKSFSGAP (190 aa)) are disordered. Residues 486-497 (RWSLTSGTSRVL) are compositionally biased toward polar residues. Residues 508–519 (ASASTSHTSLAH) are compositionally biased toward low complexity. The segment covering 534-575 (SESILNSFEQGTESSAAWQSMTDAAESASQILNRSDVFQSPT) has biased composition (polar residues). Residues 578 to 598 (GLDRRPSGGERRGRRNSDETA) are compositionally biased toward basic and acidic residues. Residues 599-612 (RSLSTRANVGTGQQ) are compositionally biased toward polar residues. A compositionally biased stretch (basic and acidic residues) spans 615 to 633 (ELGRRMDGDTSGREARDST). The segment covering 635–651 (ESDQYTQDPTKSFSGAP) has biased composition (polar residues). The GRAM 2 domain occupies 733-799 (DRFRAHFALP…RDIENVEKEK (67 aa)). Positions 920, 921, 923, 1223, 1225, 1238, 1242, 1243, 1262, and 1263 each coordinate UDP-alpha-D-glucose. The segment at 1339 to 1418 (SIASSTPFSP…SGPGRKLSGR (80 aa)) is disordered. Positions 1341 to 1355 (ASSTPFSPTPSAKTT) are enriched in low complexity. A compositionally biased stretch (acidic residues) spans 1358–1379 (QDADDDVEDSEEWTFVGDDTDM). Basic and acidic residues predominate over residues 1380–1391 (EMSRRLRDRAIS).

Belongs to the glycosyltransferase 28 family.

The protein localises to the cytoplasm. Its subcellular location is the preautophagosomal structure membrane. The enzyme catalyses a sterol + UDP-alpha-D-glucose = a sterol 3-beta-D-glucoside + UDP + H(+). The catalysed reaction is ergosterol + UDP-alpha-D-glucose = ergosteryl 3-beta-D-glucoside + UDP + H(+). Sterol glycosyltransferase responsible for the glycosylation of ergosterol to form ergosterol-glucoside. The chain is Sterol 3-beta-glucosyltransferase from Neosartorya fischeri (strain ATCC 1020 / DSM 3700 / CBS 544.65 / FGSC A1164 / JCM 1740 / NRRL 181 / WB 181) (Aspergillus fischerianus).